Reading from the N-terminus, the 866-residue chain is Oxidation resistance protein 1 (866 aa).

The tract at residues 1–92 (MSVSNLSWLK…KKDGRRMSFQ (92 aa)) is disordered. Residues 63–88 (RKSELKRFYTIDTGQKKTLDKKDGRR) are compositionally biased toward basic and acidic residues. Ser-90 carries the post-translational modification Phosphoserine. The LysM domain maps to 98-141 (IEYTVESRDSLNSIALKFDTTPNELVQLNKLFSRAVVTGQVLYV). Thr-118 bears the Phosphothreonine mark. Positions 150–168 (VESSPSLSPVSPLSPTSSE) are enriched in low complexity. The interval 150–202 (VESSPSLSPVSPLSPTSSEAEFDKTTTPDVAHPKEAPPASTVSGIRPARVVSS) is disordered. Residues 170 to 184 (EFDKTTTPDVAHPKE) show a composition bias toward basic and acidic residues. Residues Ser-201, Ser-202, and Ser-204 each carry the phosphoserine modification. One can recognise a GRAM domain in the interval 213–268 (KFLKINCKYITIGKGTVSGVLLVTPNNIMFDPHKTDPLVQENGCEEYGIMCPMEEV). The interval 293 to 540 (LSGRGSCHSK…AHGEGSSLLK (248 aa)) is disordered. Phosphoserine occurs at positions 294, 334, and 336. A Phosphothreonine modification is found at Thr-341. Residue Ser-346 is modified to Phosphoserine. A compositionally biased stretch (basic and acidic residues) spans 347-363 (PIREELLSSEPRQEKSS). Residues 364–399 (DASSESVQTVSQMEVQSLTATSEAANVPDRTSSNPG) are compositionally biased toward polar residues. Positions 433–447 (QSTEVKGQDNQDSSH) are enriched in basic and acidic residues. A compositionally biased stretch (polar residues) spans 448–465 (QESSLQQEAGEDSVSSGE). Residues 483-497 (ELKRDSETEVEELRK) are compositionally biased toward basic and acidic residues. A Phosphoserine modification is found at Ser-488. Positions 502–519 (HSMQQAKQQRDTIQQVSQ) are enriched in polar residues. Positions 543 to 570 (RRHRLHKFLCLRVGKPMRKTFVSQASAT) are mediates oxidative antimutator activity. Residues 682 to 703 (KQVAPAKADLEPESFRPNLSDP) are disordered. The TLDc domain occupies 705 to 866 (ELLLPDQIEK…IQDIEIWAFE (162 aa)).

This sequence belongs to the OXR1 family. As to expression, highly expressed in brain and testis.

The protein resides in the mitochondrion. It localises to the nucleus. It is found in the nucleolus. May be involved in protection from oxidative damage. The polypeptide is Oxidation resistance protein 1 (Oxr1) (Mus musculus (Mouse)).